A 500-amino-acid polypeptide reads, in one-letter code: L-aspartate semialdehyde sulfurtransferase (500 aa).

Cys-131 functions as the Cysteine persulfide intermediate in the catalytic mechanism. 2 consecutive CBS domains span residues 384 to 441 (MADF…IFDS) and 446 to 500 (MTKK…ARRY).

This sequence belongs to the L-aspartate semialdehyde sulfurtransferase family. As to quaternary structure, forms homodimers. May form a complex with MA_1822.

It carries out the reaction L-aspartate 4-semialdehyde + reduced 2[4Fe-4S]-[ferredoxin] + hydrogen sulfide + 3 H(+) = oxidized 2[4Fe-4S]-[ferredoxin] + L-homocysteine + H2O. Its pathway is amino-acid biosynthesis. Functionally, required for O-acetylhomoserine sulfhydrylase (OAHS)-independent homocysteine (Hcy) biosynthesis. Together with MA_1822, catalyzes the condensation of sulfide with aspartate semialdehyde to generate homocysteine. Likely functions through persulfide intermediate. This Methanosarcina acetivorans (strain ATCC 35395 / DSM 2834 / JCM 12185 / C2A) protein is L-aspartate semialdehyde sulfurtransferase.